We begin with the raw amino-acid sequence, 160 residues long: Crossover junction endodeoxyribonuclease RuvC (160 aa).

Residues Asp7, Glu70, and Asp142 contribute to the active site. Residues Asp7, Glu70, and Asp142 each contribute to the Mg(2+) site.

It belongs to the RuvC family. In terms of assembly, homodimer which binds Holliday junction (HJ) DNA. The HJ becomes 2-fold symmetrical on binding to RuvC with unstacked arms; it has a different conformation from HJ DNA in complex with RuvA. In the full resolvosome a probable DNA-RuvA(4)-RuvB(12)-RuvC(2) complex forms which resolves the HJ. It depends on Mg(2+) as a cofactor.

The protein localises to the cytoplasm. It catalyses the reaction Endonucleolytic cleavage at a junction such as a reciprocal single-stranded crossover between two homologous DNA duplexes (Holliday junction).. In terms of biological role, the RuvA-RuvB-RuvC complex processes Holliday junction (HJ) DNA during genetic recombination and DNA repair. Endonuclease that resolves HJ intermediates. Cleaves cruciform DNA by making single-stranded nicks across the HJ at symmetrical positions within the homologous arms, yielding a 5'-phosphate and a 3'-hydroxyl group; requires a central core of homology in the junction. The consensus cleavage sequence is 5'-(A/T)TT(C/G)-3'. Cleavage occurs on the 3'-side of the TT dinucleotide at the point of strand exchange. HJ branch migration catalyzed by RuvA-RuvB allows RuvC to scan DNA until it finds its consensus sequence, where it cleaves and resolves the cruciform DNA. The polypeptide is Crossover junction endodeoxyribonuclease RuvC (Ehrlichia ruminantium (strain Gardel)).